The sequence spans 752 residues: Zinc finger protein 184 (752 aa).

The KRAB domain maps to 28-99 (VTFKDVIVDF…EPSIPVGTPG (72 aa)). A phosphoserine mark is found at serine 117, serine 122, and serine 200. A Glycyl lysine isopeptide (Lys-Gly) (interchain with G-Cter in SUMO2) cross-link involves residue lysine 207. 19 C2H2-type zinc fingers span residues 223-245 (CKCN…QRTH), 251-273 (YKCN…QRIH), 279-301 (YKCD…QRIH), 307-329 (YKCD…QRIH), 335-357 (YTCN…QKIH), 363-385 (FKCD…QKIH), 391-413 (YKCN…HMIH), 419-441 (YECN…QKTH), 447-469 (YDCA…LKIH), 475-497 (YKCN…RRIH), 503-525 (FECS…QKTH), 531-553 (YECK…ERIH), 559-581 (YQCH…RKIH), 587-609 (YKCN…KRIH), 615-637 (YECA…QKTH), 643-665 (YHCN…QRIH), 671-693 (YKCN…QNTH), 699-721 (YNCN…QRIH), and 727-749 (FGCN…QRLH).

The protein belongs to the krueppel C2H2-type zinc-finger protein family.

It localises to the nucleus. May be involved in transcriptional regulation. The sequence is that of Zinc finger protein 184 (ZNF184) from Bos taurus (Bovine).